A 154-amino-acid polypeptide reads, in one-letter code: Cyanate hydratase (154 aa).

Residues Arg100, Glu103, and Ser126 contribute to the active site.

This sequence belongs to the cyanase family.

The catalysed reaction is cyanate + hydrogencarbonate + 3 H(+) = NH4(+) + 2 CO2. Catalyzes the reaction of cyanate with bicarbonate to produce ammonia and carbon dioxide. This chain is Cyanate hydratase, found in Aspergillus fumigatus (strain ATCC MYA-4609 / CBS 101355 / FGSC A1100 / Af293) (Neosartorya fumigata).